The chain runs to 225 residues: MENVLKNDWGPLLAPEFEKEYYRKLAGFLKEEYSTHVVYPKKEDIFNALEYTSYENTKVVILGQDPYHGPNQAHGLSFSVQPGIKTPPSLLNMYKELRDEYGYDIPNNGYLVKWAEQGVLLLNTVLTVRQGEANSHKGKGWEHFTDRVIELLNEREKPVIFILWGRHAQAKKKLITNTKHHIIESVHPSPLSARRGFFGSKPYSKVNTILANMGEREIDWEIPNL.

The active-site Proton acceptor is Asp65.

The protein belongs to the uracil-DNA glycosylase (UDG) superfamily. UNG family.

The protein localises to the cytoplasm. The enzyme catalyses Hydrolyzes single-stranded DNA or mismatched double-stranded DNA and polynucleotides, releasing free uracil.. Functionally, excises uracil residues from the DNA which can arise as a result of misincorporation of dUMP residues by DNA polymerase or due to deamination of cytosine. This chain is Uracil-DNA glycosylase, found in Bacillus cereus (strain ATCC 10987 / NRS 248).